A 264-amino-acid chain; its full sequence is Hydroxyethylthiazole kinase (264 aa).

Substrate is bound at residue M43. 2 residues coordinate ATP: K119 and S165. G192 lines the substrate pocket.

Belongs to the Thz kinase family. It depends on Mg(2+) as a cofactor.

It carries out the reaction 5-(2-hydroxyethyl)-4-methylthiazole + ATP = 4-methyl-5-(2-phosphooxyethyl)-thiazole + ADP + H(+). The protein operates within cofactor biosynthesis; thiamine diphosphate biosynthesis; 4-methyl-5-(2-phosphoethyl)-thiazole from 5-(2-hydroxyethyl)-4-methylthiazole: step 1/1. Its function is as follows. Catalyzes the phosphorylation of the hydroxyl group of 4-methyl-5-beta-hydroxyethylthiazole (THZ). This chain is Hydroxyethylthiazole kinase, found in Methanocorpusculum labreanum (strain ATCC 43576 / DSM 4855 / Z).